The following is a 527-amino-acid chain: Inorganic phosphate transporter 1-1 (527 aa).

The Cytoplasmic segment spans residues 1–21 (MAGGQLNVLSTLDQAKTQWYH). Residues 22–42 (FMAIVIAGMGFFTDAYDLFCI) form a helical membrane-spanning segment. At 43-70 (SLVTKLLGRIYYTDDSKDTPGALPPNVS) the chain is on the extracellular side. Residues 71–91 (AAVTGVALCGTLAGQLFFGWL) traverse the membrane as a helical segment. Over 92-99 (GDKLGRKS) the chain is Cytoplasmic. Residues 100 to 120 (VYGFTLILMVVCSVASGLSFG) form a helical membrane-spanning segment. The Extracellular segment spans residues 121–124 (SSAK). A helical transmembrane segment spans residues 125–145 (GVVSTLCFFRFWLGFGIGGDY). At 146 to 163 (PLSATIMSEYANKRTRGA) the chain is on the cytoplasmic side. Residues 164 to 184 (FIAAVFAMQGFGILFGAIVAL) form a helical membrane-spanning segment. Residues 185 to 211 (AVSAGFRHAYPAPSYSDNHAASLVPQA) lie on the Extracellular side of the membrane. The chain crosses the membrane as a helical span at residues 212-232 (DYVWRIILMFGTVPAALTYYW). Topologically, residues 233 to 292 (RMKMPETARYTALIARNAKQAAADMSKVLHTQIEESADRAETVAVGGESWGLFSRQFLRR) are cytoplasmic. The helical transmembrane segment at 293–313 (HGLHLLATTSTWFLLDIAFYS) threads the bilayer. Topologically, residues 314 to 348 (QNLFQKDIFSKVGWIPPAKTMNALEELYRIARAQA) are extracellular. Residues 349–369 (LIALCGTIPGYWFTVAFIEIM) form a helical membrane-spanning segment. The Cytoplasmic portion of the chain corresponds to 370–371 (GR). A helical transmembrane segment spans residues 372 to 392 (FWIQIMGFAMMTAFMLGLAIP). Residues 393 to 405 (YHHWTTPGHHTGF) are Extracellular-facing. A helical membrane pass occupies residues 406-426 (IVMYGFTFFFANFGPNSTTFI). Over 427 to 442 (VPAEIYPARLRSTCHG) the chain is Cytoplasmic. Residues 443–463 (ISAAAGKAGAIIGAFGFLYAA) traverse the membrane as a helical segment. Over 464-481 (QDQHKPEPGYPRGIGIKN) the chain is Extracellular. The chain crosses the membrane as a helical span at residues 482 to 502 (ALFVLAGTNFLGTIMTLLVPE). The Cytoplasmic portion of the chain corresponds to 503 to 527 (SKGMSLEVISQEVADGDDEEAAYPK).

It belongs to the major facilitator superfamily. Phosphate:H(+) symporter (TC 2.A.1.9) family. In terms of tissue distribution, expressed in roots, stems and leaves.

The protein resides in the membrane. In terms of biological role, high-affinity transporter for external inorganic phosphate. Required for phosphate acquisition in plant. This chain is Inorganic phosphate transporter 1-1 (PHT1-1), found in Oryza sativa subsp. japonica (Rice).